The primary structure comprises 110 residues: NAD(P)H-quinone oxidoreductase subunit M (110 aa).

This sequence belongs to the complex I NdhM subunit family. NDH-1 can be composed of about 15 different subunits; different subcomplexes with different compositions have been identified which probably have different functions.

The protein localises to the cellular thylakoid membrane. It catalyses the reaction a plastoquinone + NADH + (n+1) H(+)(in) = a plastoquinol + NAD(+) + n H(+)(out). The catalysed reaction is a plastoquinone + NADPH + (n+1) H(+)(in) = a plastoquinol + NADP(+) + n H(+)(out). In terms of biological role, NDH-1 shuttles electrons from an unknown electron donor, via FMN and iron-sulfur (Fe-S) centers, to quinones in the respiratory and/or the photosynthetic chain. The immediate electron acceptor for the enzyme in this species is believed to be plastoquinone. Couples the redox reaction to proton translocation, and thus conserves the redox energy in a proton gradient. Cyanobacterial NDH-1 also plays a role in inorganic carbon-concentration. This Synechococcus elongatus (strain ATCC 33912 / PCC 7942 / FACHB-805) (Anacystis nidulans R2) protein is NAD(P)H-quinone oxidoreductase subunit M.